The following is a 146-amino-acid chain: Arginine repressor (146 aa).

Belongs to the ArgR family.

Its subcellular location is the cytoplasm. It functions in the pathway amino-acid biosynthesis; L-arginine biosynthesis [regulation]. Its function is as follows. Regulates arginine biosynthesis genes. The protein is Arginine repressor of Parabacteroides distasonis (strain ATCC 8503 / DSM 20701 / CIP 104284 / JCM 5825 / NCTC 11152).